The chain runs to 585 residues: MKQRELRERAAELPAEPGVYQFLEDNTVRYVGKALELRDRVRSYADPRSERIRQMVARADDIDIALTETETQALLLEANLIKRHQPRYNVRLKDDKSYPLVQFTNHSVPRIEVTRDPDSDATVFGPYTEVKRLETAVKALREVYGLRGCSDHKYNNRNRPCLEYEVGLCSAPCTGEIDATAYRSAVESAVQFFEGKTGILADPLRQEMQAAATAEEFERAANIRDRLAVIESFHGGGEAAVSSEDNSHTAETTSERAVDVLGVAIEGTTATVARLHSDNGQLVDRSQHRLNAPTGEDRASAVLTAFLTQYYAERSLPDAILCSEHPHDNDVREWLSVEGVNIRVPGTGRESKLIDLALKNARNGSVHDNESAALADALGFSIINRIEGFDVSHSQGRAVVGSNVCFIDGSAATDAYRRKRLTDTNDDYARMQELLTWRAKRACDGRDERPDPDLIVIDGGKGQLRAAREAVETTGWDVSTIALAKADELVVTPNGVHDWDADAPQLHLLQRVRDEAHRFAVQYHQSIRDDIHTVLSDVPGVGEQTQQALLRRFGSVENVRSASRDALCDVPGVGKQTADTIANRL.

The 76-residue stretch at 15 to 90 (AEPGVYQFLE…IKRHQPRYNV (76 aa)) folds into the GIY-YIG domain. The UVR domain maps to 198–233 (GILADPLRQEMQAAATAEEFERAANIRDRLAVIESF).

The protein belongs to the UvrC family. As to quaternary structure, interacts with UvrB in an incision complex.

The protein resides in the cytoplasm. The UvrABC repair system catalyzes the recognition and processing of DNA lesions. UvrC both incises the 5' and 3' sides of the lesion. The N-terminal half is responsible for the 3' incision and the C-terminal half is responsible for the 5' incision. This Haloquadratum walsbyi (strain DSM 16790 / HBSQ001) protein is UvrABC system protein C.